The sequence spans 636 residues: MNPSAPSYPMASLYVGDLHPDVTEAMLYEKFSPAGPILSIRVCRDMITRRSLGYAYVNFQQPADAERALDTMNFDVIKGKPVRIMWSQRDPSLRKSGVGNIFIKNLDKSIDNKALYDTFSAFGNILSCKVVCDENGSKGYGFVHFETQEAAERAIEKMNGMLLNDRKVFVGRFKSRKEREAELGARAKEFTNVYIKNFGEDMDDERLKELFGKFGPALSVKVMTDESGKSKGFGFVSFERHEDAQKAVDEMNGKELNGKQIYVGRAQKKVERQTELKRKFEQMKQDRITRYQGVNLYVKNLDDGIDDERLRKEFSPFGTITSAKVMMEGGRSKGFGFVCFSSPEEATKAVTEMNGRIVATKPLYVALAQRKEERQAHLTNQYMQRMASVRAVPNPVINPYQPAPPSGYFMAAIPQTQNRAAYYPPSQIAQLRPSPRWTAQGARPHPFQNMPGAIRPAAPRPPFSTMRPASSQVPRVMSTQRVANTSTQTMGPRPAAAATAATPAVRTVPQYKYAAGVRNPQQHLNAQPQVTMQQPAVHVQGQEPLTASMLASAPPQEQKQMLGERLFPLIQAMHPSLAGKITGMLLEIDNSELLHMLESPESLRSKVDEAVAVLQAHQAKEAAQKAVNSATGVPTV.

N-acetylmethionine is present on M1. RRM domains follow at residues 11-89 (ASLY…WSQR), 99-175 (GNIF…RFKS), 191-268 (TNVY…RAQK), and 294-370 (VNLY…LAQR). The tract at residues 166–289 (RKVFVGRFKS…FEQMKQDRIT (124 aa)) is UNR-binding. K299 is subject to N6-methyllysine. S315 carries the post-translational modification Phosphoserine. Residue T319 is modified to Phosphothreonine. 4 positions are modified to omega-N-methylarginine: R385, R419, R432, and R436. Omega-N-methylated arginine; by CARM1 is present on residues R455 and R460. Omega-N-methylarginine occurs at positions 475 and 481. At R493 the chain carries Asymmetric dimethylarginine; alternate. R493 bears the Dimethylated arginine; alternate mark. Position 493 is an omega-N-methylarginine; alternate (R493). R506 is subject to Omega-N-methylarginine. K512 bears the N6-acetyllysine mark. Residue R518 is modified to Omega-N-methylarginine. The PABC domain occupies 542–619 (QEPLTASMLA…AVAVLQAHQA (78 aa)).

The protein belongs to the polyadenylate-binding protein type-1 family. May form homodimers. Component of a multisubunit autoregulatory ribonucleoprotein complex (ARC), at least composed of IGF2BP1, PABPC1 and CSDE1. Directly interacts with IGF2BP1. Part of a complex associated with the FOS mCRD domain and consisting of HNRPD, SYNCRIP, PAIP1 and CSDE1/UNR. Interacts with PAIP1 and PAIP2 (via the PABPC1-interacting motifs PAM1 and PAM2). Interacts with PAIP1 with a 1:1 stoichiometry and with PAIP2 with a 1:2 stoichiometry. The interaction with CSDE1 is direct and RNA-independent. Found in a mRNP complex with YBX2. Interacts with TENT2/GLD2. Identified in the spliceosome C complex. Identified in a mRNP complex, at least composed of DHX9, DDX3X, ELAVL1, HNRNPU, IGF2BP1, ILF3, PABPC1, PCBP2, PTBP2, STAU1, STAU2, SYNCRIP and YBX1. The interaction with DDX3X is direct and RNA-independent. This interaction increases in stressed cells and decreases during cell recovery. Identified in a IGF2BP1-dependent mRNP granule complex containing untranslated mRNAs. Interacts with NXF1/TAP. Interacts with PIWIL1. Interacts with AGO1, AGO2, GSPT1 and GSPT2. Interacts with LARP4B. Interacts (via the second and third RRM domains and the C-terminus) with PAIP2B (via central acidic portion and C-terminus). Forms a complex with LARP1 and SHFL. Interacts with LARP4. Interacts with ZFC3H1 in a RNase-sensitive manner. Interacts with TRIM71 (via NHL repeats) in an RNA-dependent manner. Interacts with TENT5C; the interaction has no effect on TENT5C poly(A) polymerase function. Interacts with G3BP1 and G3BP2. Interacts with ENDOV; the interaction is RNA-dependent and stimulates ENDOV activity. Interacts with UPF1; the interaction is RNA-dependent. Interacts with IGF2BP2 and IGF2BP3. May interact with SETX. Interacts with RBM46. Interacts with PAN3 isoform 1/Pan3L and isoform 3/Pan3S (via N-terminus); interaction with isoform 1 is less efficient than with isoform 3. In terms of processing, phosphorylated by MAPKAPK2. Methylated by CARM1. Arg-493 is dimethylated, probably to asymmetric dimethylarginine.

It localises to the cytoplasm. The protein resides in the stress granule. The protein localises to the nucleus. It is found in the cell projection. Its subcellular location is the lamellipodium. Functionally, binds the poly(A) tail of mRNA, including that of its own transcript, and regulates processes of mRNA metabolism such as pre-mRNA splicing and mRNA stability. Its function in translational initiation regulation can either be enhanced by PAIP1 or repressed by PAIP2. Can probably bind to cytoplasmic RNA sequences other than poly(A) in vivo. Binds to N6-methyladenosine (m6A)-containing mRNAs and contributes to MYC stability by binding to m6A-containing MYC mRNAs. Involved in translationally coupled mRNA turnover. Implicated with other RNA-binding proteins in the cytoplasmic deadenylation/translational and decay interplay of the FOS mRNA mediated by the major coding-region determinant of instability (mCRD) domain. Involved in regulation of nonsense-mediated decay (NMD) of mRNAs containing premature stop codons; for the recognition of premature termination codons (PTC) and initiation of NMD a competitive interaction between UPF1 and PABPC1 with the ribosome-bound release factors is proposed. By binding to long poly(A) tails, may protect them from uridylation by ZCCHC6/ZCCHC11 and hence contribute to mRNA stability. This chain is Polyadenylate-binding protein 1 (Pabpc1), found in Rattus norvegicus (Rat).